A 66-amino-acid chain; its full sequence is Muscarinic toxin 4 (66 aa).

Disulfide bonds link Cys3–Cys24, Cys17–Cys42, Cys46–Cys58, and Cys59–Cys64.

This sequence belongs to the three-finger toxin family. Short-chain subfamily. Aminergic toxin sub-subfamily. Monomer. In terms of tissue distribution, expressed by the venom gland.

It localises to the secreted. Binds to the muscarinic acetylcholine receptor (CHRM). The protein is Muscarinic toxin 4 of Dendroaspis angusticeps (Eastern green mamba).